A 77-amino-acid polypeptide reads, in one-letter code: UPF0401 protein c3666 (77 aa).

It belongs to the UPF0401 family.

The protein is UPF0401 protein c3666 of Escherichia coli O6:H1 (strain CFT073 / ATCC 700928 / UPEC).